A 117-amino-acid chain; its full sequence is uncharacterized protein (117 aa).

The chain crosses the membrane as a helical span at residues 57–77 (LGFPLGLLVFLHSLIVARFFV).

Its subcellular location is the membrane. This is an uncharacterized protein from Schizosaccharomyces pombe (strain 972 / ATCC 24843) (Fission yeast).